The following is a 48-amino-acid chain: Delta-actitoxin-Bgr2b (48 aa).

Intrachain disulfides connect C4–C45, C6–C35, and C28–C46.

This sequence belongs to the sea anemone sodium channel inhibitory toxin family. Type I subfamily.

The protein localises to the secreted. It is found in the nematocyst. In terms of biological role, binds voltage-dependently at site 3 of sodium channels (Nav) and inhibits the inactivation of the activated channels, thereby blocking neuronal transmission. Has effect on SCN4A/SCN1B, and SCN5A/SCN1B, has no effect on SCN2A/SCN1B, and SCN10A/SCN1B. Possesses the highest efficacy for the insect sodium channel para/tipE. Also interacts with sodium channels in cardiac cells. Shows lethality to crabs. This chain is Delta-actitoxin-Bgr2b, found in Bunodosoma granuliferum (Red warty sea anemone).